A 247-amino-acid polypeptide reads, in one-letter code: Phycobilisome rod-core linker polypeptide CpcG2 (247 aa).

One can recognise a PBS-linker domain in the interval Ser11–Arg189. Residues Pro223–Arg247 form a disordered region.

This sequence belongs to the phycobilisome linker protein family. In terms of assembly, part of the phycobilisome, a hemidiscoidal structure that is composed of two distinct substructures: a core complex and a number of rods radiating from the core.

Its subcellular location is the cellular thylakoid membrane. Its function is as follows. Rod-core linker protein required for attachment of phycocyanin to allophycocyanin in cores of phycobilisomes. Functionally, linker polypeptides determine the state of aggregation and the location of the disk-shaped phycobiliprotein units within the phycobilisome and modulate their spectroscopic properties in order to mediate a directed and optimal energy transfer. This chain is Phycobilisome rod-core linker polypeptide CpcG2, found in Nostoc sp. (strain PCC 7120 / SAG 25.82 / UTEX 2576).